The chain runs to 136 residues: Histone H3.3C (136 aa).

The tract at residues methionine 1–proline 44 is disordered. Arginine 3 carries the asymmetric dimethylarginine; by PRMT6; alternate modification. Citrulline; alternate is present on arginine 3. Threonine 4 carries the phosphothreonine; by HASPIN modification. Position 5 is an allysine; alternate (lysine 5). Residue lysine 5 is modified to N6,N6,N6-trimethyllysine; alternate. An N6,N6-dimethyllysine; alternate modification is found at lysine 5. Residue lysine 5 is modified to N6-(2-hydroxyisobutyryl)lysine; alternate. An N6-(beta-hydroxybutyryl)lysine; alternate modification is found at lysine 5. An N6-acetyllysine; alternate modification is found at lysine 5. An N6-methyllysine; alternate modification is found at lysine 5. Position 6 is a 5-glutamyl dopamine; alternate (glutamine 6). A 5-glutamyl serotonin; alternate modification is found at glutamine 6. The residue at position 7 (threonine 7) is a Phosphothreonine; by PKC. Arginine 9 carries the post-translational modification Symmetric dimethylarginine. N6,N6,N6-trimethyllysine; alternate is present on lysine 10. Lysine 10 carries the N6,N6-dimethyllysine; alternate modification. Lysine 10 bears the N6-(2-hydroxyisobutyryl)lysine; alternate mark. Lysine 10 carries the post-translational modification N6-(beta-hydroxybutyryl)lysine; alternate. Lysine 10 bears the N6-acetyllysine; alternate mark. At lysine 10 the chain carries N6-methyllysine; alternate. N6-lactoyllysine; alternate is present on lysine 10. Serine 11 is subject to ADP-ribosylserine; alternate. The residue at position 11 (serine 11) is a Phosphoserine; alternate; by AURKB, AURKC, RPS6KA3, RPS6KA4 and RPS6KA5. Threonine 12 is subject to Phosphothreonine; by PKC. Position 15 is an N6-(2-hydroxyisobutyryl)lysine; alternate (lysine 15). An N6-(beta-hydroxybutyryl)lysine; alternate modification is found at lysine 15. Lysine 15 is modified (N6-acetyllysine; alternate). Lysine 15 carries the post-translational modification N6-lactoyllysine; alternate. Lysine 15 carries the N6-glutaryllysine; alternate modification. Lysine 15 is subject to N6-succinyllysine; alternate. Arginine 18 is modified (asymmetric dimethylarginine). N6-(2-hydroxyisobutyryl)lysine; alternate is present on residues lysine 19 and lysine 24. Lysine 19 and lysine 24 each carry N6-(beta-hydroxybutyryl)lysine; alternate. 2 positions are modified to N6-acetyllysine; alternate: lysine 19 and lysine 24. 2 positions are modified to N6-methyllysine; alternate: lysine 19 and lysine 24. N6-lactoyllysine; alternate occurs at positions 19 and 24. Lysine 19 and lysine 24 each carry N6-glutaryllysine; alternate. 2 positions are modified to N6-butyryllysine; alternate: lysine 19 and lysine 24. Citrulline is present on arginine 27. Position 28 is an N6,N6,N6-trimethyllysine; alternate (lysine 28). Residue lysine 28 is modified to N6,N6-dimethyllysine; alternate. Lysine 28 is modified (N6-(2-hydroxyisobutyryl)lysine; alternate). Lysine 28 is subject to N6-acetyllysine; alternate. Lysine 28 carries the post-translational modification N6-methyllysine; alternate. The residue at position 28 (lysine 28) is an N6-lactoyllysine; alternate. Lysine 28 is modified (N6-glutaryllysine; alternate). At serine 29 the chain carries ADP-ribosylserine; alternate. A Phosphoserine; alternate; by AURKB, AURKC and RPS6KA5 modification is found at serine 29. At serine 32 the chain carries Phosphoserine. Lysine 37 carries the post-translational modification N6,N6,N6-trimethyllysine; alternate. Residue lysine 37 is modified to N6,N6-dimethyllysine; alternate. Lysine 37 is modified (N6-(2-hydroxyisobutyryl)lysine; alternate). At lysine 37 the chain carries N6-acetyllysine; alternate. N6-methyllysine; alternate is present on lysine 37. Lysine 38 carries the post-translational modification N6-methyllysine. A Phosphotyrosine modification is found at tyrosine 42. At lysine 57 the chain carries N6,N6,N6-trimethyllysine; alternate. Lysine 57 is modified (N6-(2-hydroxyisobutyryl)lysine; alternate). N6-(beta-hydroxybutyryl)lysine; alternate is present on lysine 57. The residue at position 57 (lysine 57) is an N6-acetyllysine; alternate. An N6-methyllysine; alternate modification is found at lysine 57. An N6-lactoyllysine; alternate modification is found at lysine 57. At lysine 57 the chain carries N6-glutaryllysine; alternate. Position 57 is an N6-succinyllysine; alternate (lysine 57). At serine 58 the chain carries Phosphoserine. Residues lysine 65 and lysine 80 each carry the N6-(2-hydroxyisobutyryl)lysine; alternate modification. N6-methyllysine; alternate is present on residues lysine 65 and lysine 80. Lysine 80 carries the post-translational modification N6,N6,N6-trimethyllysine; alternate. Lysine 80 bears the N6,N6-dimethyllysine; alternate mark. An N6-acetyllysine; alternate modification is found at lysine 80. Lysine 80 carries the post-translational modification N6-lactoyllysine; alternate. At lysine 80 the chain carries N6-glutaryllysine; alternate. Lysine 80 bears the N6-succinyllysine; alternate mark. A Phosphothreonine modification is found at threonine 81. A Phosphoserine modification is found at serine 87. The residue at position 108 (threonine 108) is a Phosphothreonine. The residue at position 116 (lysine 116) is an N6-acetyllysine; alternate. Lysine 116 bears the N6-glutaryllysine; alternate mark.

This sequence belongs to the histone H3 family. In terms of assembly, the nucleosome is a histone octamer containing two molecules each of H2A, H2B, H3 and H4 assembled in one H3-H4 heterotetramer and two H2A-H2B heterodimers. The octamer wraps approximately 147 bp of DNA. In terms of processing, acetylation is generally linked to gene activation. Acetylation on Lys-19 (H3K18ac) favors methylation at Arg-18 (H3R17me). Citrullination at Arg-18 by PADI4 impairs methylation and represses transcription. Post-translationally, asymmetric dimethylation at Arg-18 (H3R17me2a) by CARM1 is linked to gene activation. Asymmetric dimethylation at Arg-3 (H3R2me2a) by PRMT6 is linked to gene repression and is mutually exclusive with H3 Lys-5 methylation (H3K4me2 and H3K4me3). H3R2me2a is present at the 3' of genes regardless of their transcription state and is enriched on inactive promoters, while it is absent on active promoters. In terms of processing, methylation at Lys-5 (H3K4me) and Lys-80 (H3K79me) are linked to gene activation. Methylation at Lys-5 (H3K4me) facilitates subsequent acetylation of H3 and H4. Methylation at Lys-80 (H3K79me) is associated with DNA double-strand break (DSB) responses and is a specific target for TP53BP1. Methylation at Lys-10 (H3K9me) and Lys-28 (H3K27me) are linked to gene repression. Methylation at Lys-10 (H3K9me) is a specific target for HP1 proteins (CBX1, CBX3 and CBX5) and prevents subsequent phosphorylation at Ser-11 (H3S10ph) and acetylation of H3 and H4. Methylation at Lys-5 (H3K4me) and Lys-80 (H3K79me) require preliminary monoubiquitination of H2B at 'Lys-120'. Methylation at Lys-10 (H3K9me) and Lys-28 (H3K27me) are enriched in inactive X chromosome chromatin. Monomethylation at Lys-57 (H3K56me1) by EHMT2/G9A in G1 phase promotes interaction with PCNA and is required for DNA replication. Phosphorylated at Thr-4 (H3T3ph) by HASPIN during prophase and dephosphorylated during anaphase. Phosphorylation at Ser-11 (H3S10ph) by AURKB is crucial for chromosome condensation and cell-cycle progression during mitosis and meiosis. In addition phosphorylation at Ser-11 (H3S10ph) by RPS6KA4 and RPS6KA5 is important during interphase because it enables the transcription of genes following external stimulation, like mitogens, stress, growth factors or UV irradiation and result in the activation of genes, such as c-fos and c-jun. Phosphorylation at Ser-11 (H3S10ph), which is linked to gene activation, prevents methylation at Lys-10 (H3K9me) but facilitates acetylation of H3 and H4. Phosphorylation at Ser-11 (H3S10ph) by AURKB mediates the dissociation of HP1 proteins (CBX1, CBX3 and CBX5) from heterochromatin. Phosphorylation at Ser-11 (H3S10ph) is also an essential regulatory mechanism for neoplastic cell transformation. Phosphorylated at Ser-29 (H3S28ph) by MAP3K20 isoform 1, RPS6KA5 or AURKB during mitosis or upon ultraviolet B irradiation. Phosphorylation at Thr-7 (H3T6ph) by PRKCB is a specific tag for epigenetic transcriptional activation that prevents demethylation of Lys-5 (H3K4me) by LSD1/KDM1A. At centromeres, specifically phosphorylated at Thr-12 (H3T11ph) from prophase to early anaphase, by DAPK3 and PKN1. Phosphorylation at Thr-12 (H3T11ph) by PKN1 or isoform M2 of PKM (PKM2) is a specific tag for epigenetic transcriptional activation that promotes demethylation of Lys-10 (H3K9me) by KDM4C/JMJD2C. Phosphorylation at Tyr-42 (H3Y41ph) by JAK2 promotes exclusion of CBX5 (HP1 alpha) from chromatin. Post-translationally, lysine deamination at Lys-5 (H3K4all) to form allysine is mediated by LOXL2. Allysine formation by LOXL2 only takes place on H3K4me3 and results in gene repression. In terms of processing, butyrylation of histones marks active promoters and competes with histone acetylation. It is present during late spermatogenesis. Succinylation at Lys-80 (H3K79succ) by KAT2A takes place with a maximum frequency around the transcription start sites of genes. It gives a specific tag for epigenetic transcription activation. Post-translationally, serine ADP-ribosylation constitutes the primary form of ADP-ribosylation of proteins in response to DNA damage. Serine ADP-ribosylation at Ser-11 (H3S10ADPr) is mutually exclusive with phosphorylation at Ser-11 (H3S10ph) and impairs acetylation at Lys-10 (H3K9ac).

It localises to the nucleus. Its subcellular location is the chromosome. Core component of nucleosome. Nucleosomes wrap and compact DNA into chromatin, limiting DNA accessibility to the cellular machineries which require DNA as a template. Histones thereby play a central role in transcription regulation, DNA repair, DNA replication and chromosomal stability. DNA accessibility is regulated via a complex set of post-translational modifications of histones, also called histone code, and nucleosome remodeling. The chain is Histone H3.3C from Bos taurus (Bovine).